The following is a 302-amino-acid chain: Lysosomal thioesterase PPT2 (302 aa).

The first 27 residues, 1–27 (MPGLWRQRLPSAWALLLLPFLPLLLPA), serve as a signal peptide directing secretion. N-linked (GlcNAc...) asparagine glycosylation is present at asparagine 60. Intrachain disulfides connect cysteine 109–cysteine 117 and cysteine 165–cysteine 176. Serine 111 (nucleophile) is an active-site residue. Residues asparagine 190 and asparagine 206 are each glycosylated (N-linked (GlcNAc...) asparagine). Aspartate 228 is a catalytic residue. N-linked (GlcNAc...) asparagine glycosylation is present at asparagine 245. Cysteine 276 and cysteine 296 are oxidised to a cystine. Residue histidine 283 is part of the active site. Residue asparagine 289 is glycosylated (N-linked (GlcNAc...) asparagine).

This sequence belongs to the palmitoyl-protein thioesterase family.

The protein localises to the lysosome. The enzyme catalyses hexadecanoyl-CoA + H2O = hexadecanoate + CoA + H(+). The catalysed reaction is S-hexadecanoyl-N-acetylcysteamine + H2O = N-acetylcysteamine + hexadecanoate + H(+). Catalyzes the cleavage of thioester bonds from S-palmitoyl-CoA or S-palmitoyl-N-acetylcysteamine (unbranched structures) but does not have activity against palmitoylcysteine or palmitoylated proteins, branched structures or bulky head groups. Conversely, hydrolyzes both long and short chain fatty acyl-CoA substrate. This Rattus norvegicus (Rat) protein is Lysosomal thioesterase PPT2 (Ppt2).